The sequence spans 501 residues: Nuclear receptor subfamily 5 group A member 2 (501 aa).

Residues 43-114 (EELCPVCGDK…KCLSVGMKLE (72 aa)) constitute a DNA-binding region (nuclear receptor). Zn(2+) is bound by residues Cys-46, Cys-49, Cys-63, Cys-66, Cys-82, Cys-88, Cys-98, and Cys-101. NR C4-type zinc fingers lie at residues 46-66 (CPVC…CESC) and 82-106 (CIEN…FQKC). The tract at residues 112–127 (KLEAVRADRMRGGRNK) is C-terminal extension (CTE). The short motif at 128–147 (FGPMYKRDRALKQQKKALIR) is the FTZ-F1 box element. Residues 186–207 (NHTALPPTDYDRSPFVTSPISM) are disordered. An NR LBD domain is found at 260-499 (SIPHLILELQ…NLLIEMLHAK (240 aa)). A phospholipid derivative-binding positions include 381-384 (GATL), Tyr-476, and Lys-480. The AF-2 stretch occupies residues 488–499 (CNNLLIEMLHAK).

The protein belongs to the nuclear hormone receptor family. NR5 subfamily. As to quaternary structure, monomer; Binds DNA as a monomer. Detected in liver and adrenal gland.

The protein resides in the nucleus. It is found in the chromosome. Its function is as follows. Orphan nuclear receptor that binds DNA as a monomer to the 5'-TCAAGGCCA-3' sequence and controls expression of target genes: regulates key biological processes, such as cholesterol and bile acid synthesis pathways, as well as cartilage, liver and pancreas morphogenesis. Ligand-binding causes conformational change which causes recruitment of coactivators, promoting target gene activation. The specific ligand is unknown, but specific phospholipids, such as phosphatidylethanolamine, phosphatidylserine, dilauroyl phosphatidylcholine and diundecanoyl phosphatidylcholine can act as ligand in vitro. Acts as a pioneer transcription factor, which unwraps target DNA from histones and elicits local opening of closed chromatin. Involved in the formation of connective tissue in lower jaw. In Gallus gallus (Chicken), this protein is Nuclear receptor subfamily 5 group A member 2.